Consider the following 1253-residue polypeptide: Cytoplasmic FMR1-interacting protein 2 (1253 aa).

Belongs to the CYFIP family.

It localises to the cytoplasm. Involved in T-cell adhesion and p53-dependent induction of apoptosis. Does not bind RNA. The chain is Cytoplasmic FMR1-interacting protein 2 (cyfip2) from Xenopus laevis (African clawed frog).